The sequence spans 29 residues: Glucagon (29 aa).

This sequence belongs to the glucagon family.

The protein resides in the secreted. Glucagon plays a key role in glucose metabolism and homeostasis. Regulates blood glucose by increasing gluconeogenesis and decreasing glycolysis. This chain is Glucagon (gcg), found in Polypterus senegalus (Senegal bichir).